A 98-amino-acid chain; its full sequence is Exopolysaccharide production repressor protein (98 aa).

2 consecutive transmembrane segments (helical) span residues 6-26 and 35-55; these read VFLS…YLNG and TLIC…FLVW. A disordered region spans residues 73-98; it reads AEAANDEKQPGKVSLRRLNRPHHLNS. A compositionally biased stretch (basic residues) spans 86–98; it reads SLRRLNRPHHLNS.

It is found in the cell membrane. It participates in glycan metabolism; exopolysaccharide biosynthesis. In terms of biological role, inhibition of exopolysaccharide synthesis (EPS) and nodulation ability (NOD). This chain is Exopolysaccharide production repressor protein (exoX), found in Rhizobium meliloti (strain 1021) (Ensifer meliloti).